A 62-amino-acid polypeptide reads, in one-letter code: Large ribosomal subunit protein bL28 (62 aa).

This sequence belongs to the bacterial ribosomal protein bL28 family.

The sequence is that of Large ribosomal subunit protein bL28 from Streptococcus thermophilus (strain CNRZ 1066).